A 491-amino-acid chain; its full sequence is Protein nucleotidyltransferase YdiU (491 aa).

8 residues coordinate ATP: glycine 88, glycine 90, arginine 91, lysine 111, aspartate 123, glycine 124, arginine 174, and arginine 181. Residue aspartate 250 is the Proton acceptor of the active site. 2 residues coordinate Mg(2+): asparagine 251 and aspartate 260. Aspartate 260 is a binding site for ATP.

It belongs to the SELO family. Mg(2+) is required as a cofactor. It depends on Mn(2+) as a cofactor.

The catalysed reaction is L-seryl-[protein] + ATP = 3-O-(5'-adenylyl)-L-seryl-[protein] + diphosphate. The enzyme catalyses L-threonyl-[protein] + ATP = 3-O-(5'-adenylyl)-L-threonyl-[protein] + diphosphate. It catalyses the reaction L-tyrosyl-[protein] + ATP = O-(5'-adenylyl)-L-tyrosyl-[protein] + diphosphate. It carries out the reaction L-histidyl-[protein] + UTP = N(tele)-(5'-uridylyl)-L-histidyl-[protein] + diphosphate. The catalysed reaction is L-seryl-[protein] + UTP = O-(5'-uridylyl)-L-seryl-[protein] + diphosphate. The enzyme catalyses L-tyrosyl-[protein] + UTP = O-(5'-uridylyl)-L-tyrosyl-[protein] + diphosphate. In terms of biological role, nucleotidyltransferase involved in the post-translational modification of proteins. It can catalyze the addition of adenosine monophosphate (AMP) or uridine monophosphate (UMP) to a protein, resulting in modifications known as AMPylation and UMPylation. This Bradyrhizobium diazoefficiens (strain JCM 10833 / BCRC 13528 / IAM 13628 / NBRC 14792 / USDA 110) protein is Protein nucleotidyltransferase YdiU.